A 649-amino-acid chain; its full sequence is Threonine--tRNA ligase (649 aa).

The region spanning M1–T66 is the TGS domain. The catalytic stretch occupies residues D247 to P538. Residues C338, H389, and H515 each contribute to the Zn(2+) site.

It belongs to the class-II aminoacyl-tRNA synthetase family. As to quaternary structure, homodimer. It depends on Zn(2+) as a cofactor.

It is found in the cytoplasm. It carries out the reaction tRNA(Thr) + L-threonine + ATP = L-threonyl-tRNA(Thr) + AMP + diphosphate + H(+). Its function is as follows. Catalyzes the attachment of threonine to tRNA(Thr) in a two-step reaction: L-threonine is first activated by ATP to form Thr-AMP and then transferred to the acceptor end of tRNA(Thr). Also edits incorrectly charged L-seryl-tRNA(Thr). The sequence is that of Threonine--tRNA ligase from Bordetella bronchiseptica (strain ATCC BAA-588 / NCTC 13252 / RB50) (Alcaligenes bronchisepticus).